The sequence spans 133 residues: 6,7-dimethyl-8-ribityllumazine synthase (133 aa).

Residues Phe-11, 43-45 (AYD), and 67-69 (AIV) each bind 5-amino-6-(D-ribitylamino)uracil. 72 to 73 (DT) lines the (2S)-2-hydroxy-3-oxobutyl phosphate pocket. His-75 serves as the catalytic Proton donor. Phe-100 is a binding site for 5-amino-6-(D-ribitylamino)uracil. Arg-115 lines the (2S)-2-hydroxy-3-oxobutyl phosphate pocket.

The protein belongs to the DMRL synthase family.

It catalyses the reaction (2S)-2-hydroxy-3-oxobutyl phosphate + 5-amino-6-(D-ribitylamino)uracil = 6,7-dimethyl-8-(1-D-ribityl)lumazine + phosphate + 2 H2O + H(+). It functions in the pathway cofactor biosynthesis; riboflavin biosynthesis; riboflavin from 2-hydroxy-3-oxobutyl phosphate and 5-amino-6-(D-ribitylamino)uracil: step 1/2. Catalyzes the formation of 6,7-dimethyl-8-ribityllumazine by condensation of 5-amino-6-(D-ribitylamino)uracil with 3,4-dihydroxy-2-butanone 4-phosphate. This is the penultimate step in the biosynthesis of riboflavin. The polypeptide is 6,7-dimethyl-8-ribityllumazine synthase (Halobacterium salinarum (strain ATCC 29341 / DSM 671 / R1)).